Consider the following 110-residue polypeptide: UPF0060 membrane protein RSp1275 (110 aa).

Helical transmembrane passes span 8 to 28, 33 to 53, 63 to 83, and 90 to 110; these read FLFA…WLVL, SAWL…LLTL, AAYG…VDGA, and IGGA…PQPT.

This sequence belongs to the UPF0060 family.

It is found in the cell inner membrane. This chain is UPF0060 membrane protein RSp1275, found in Ralstonia nicotianae (strain ATCC BAA-1114 / GMI1000) (Ralstonia solanacearum).